The following is an 872-amino-acid chain: Extended synaptotagmin-2-A (872 aa).

Residues 1 to 25 form a disordered region; the sequence is MSSESSAEKGPPPSPAENVQPGVPP. Residues 1-31 lie on the Cytoplasmic side of the membrane; it reads MSSESSAEKGPPPSPAENVQPGVPPAAEEPG. The chain crosses the membrane as a helical span at residues 32–52; the sequence is MISVDIAGLFYQFSKTFILIF. The Lumenal portion of the chain corresponds to 53 to 55; it reads PVY. Residues 56–76 traverse the membrane as a helical segment; that stretch reads VLGYFGLSFSWLLIALVLLLW. Residues 77 to 872 are Cytoplasmic-facing; the sequence is WRRNKGNKNS…EDGTRPAVSS (796 aa). Residues 119–298 enclose the SMP-LTD domain; that stretch reads DIERAEWLNK…LPNRITVPLV (180 aa). 2 consecutive C2 domains span residues 297 to 417 and 442 to 588; these read LVSD…DEWF and NLDQ…HLNN. The Ca(2+) site is built by Lys-328, Asp-329, Asp-341, Asp-388, Glu-389, Asp-390, Asp-392, Asp-394, and Asp-395. Residues 608 to 617 are compositionally biased toward basic and acidic residues; that stretch reads KPVRSPDEQH. The interval 608-711 is disordered; that stretch reads KPVRSPDEQH…EPTPSIASDI (104 aa). A compositionally biased stretch (pro residues) spans 632-652; sequence PPTPQMPSPSPAVAHKPPPTP. Residues 664–681 are compositionally biased toward polar residues; sequence NKGTPPSASPKSPTELHQ. Residues 682–696 show a composition bias toward low complexity; it reads SSSSLSGSSFTYSPS. The 123-residue stretch at 737–859 folds into the C2 3 domain; the sequence is PLGQIQLTIR…DAAKGWTQWY (123 aa). The tract at residues 784-791 is required for phosphatidylinositol 4,5-bisphosphate-dependent location at the cell membrane; it reads KRRSGRRK.

It belongs to the extended synaptotagmin family. As to quaternary structure, interacts with fgfr1 that has been activated by fgf1 binding. Interacts (via C2 domains) with the AP-2 complex (via an alpha subunit). Identified in a complex with the AP-2 complex and fgfr1.

The protein localises to the cell membrane. It localises to the endoplasmic reticulum membrane. In terms of biological role, tethers the endoplasmic reticulum to the cell membrane and promotes the formation of appositions between the endoplasmic reticulum and the cell membrane. Binds glycerophospholipids in a barrel-like domain and may play a role in cellular lipid transport. Plays a role in the rapid internalization of fgfr1 that has been activated by fgf1 binding; this occurs most likely via the AP-2 complex. Required for normal fgf signaling and the activation of downstream signaling cascades via its role in the internalization of activated fgfr1. Required for normal embryonic development via its role in fgf signaling and the downstream regulation of t/xBRA expression. This chain is Extended synaptotagmin-2-A (esyt2-a), found in Xenopus laevis (African clawed frog).